The following is a 423-amino-acid chain: 3-phosphoshikimate 1-carboxyvinyltransferase (423 aa).

Residues Lys-21, Ser-22, and Arg-26 each contribute to the 3-phosphoshikimate site. Residue Lys-21 participates in phosphoenolpyruvate binding. Gly-92 and Arg-120 together coordinate phosphoenolpyruvate. 3-phosphoshikimate is bound by residues Ser-166, Gln-168, Ser-194, Asp-310, and Lys-337. Gln-168 contributes to the phosphoenolpyruvate binding site. Residue Asp-310 is the Proton acceptor of the active site. 3 residues coordinate phosphoenolpyruvate: Arg-341, Arg-384, and Lys-409.

The protein belongs to the EPSP synthase family. In terms of assembly, monomer.

It localises to the cytoplasm. It carries out the reaction 3-phosphoshikimate + phosphoenolpyruvate = 5-O-(1-carboxyvinyl)-3-phosphoshikimate + phosphate. Its pathway is metabolic intermediate biosynthesis; chorismate biosynthesis; chorismate from D-erythrose 4-phosphate and phosphoenolpyruvate: step 6/7. Catalyzes the transfer of the enolpyruvyl moiety of phosphoenolpyruvate (PEP) to the 5-hydroxyl of shikimate-3-phosphate (S3P) to produce enolpyruvyl shikimate-3-phosphate and inorganic phosphate. The polypeptide is 3-phosphoshikimate 1-carboxyvinyltransferase (Syntrophobacter fumaroxidans (strain DSM 10017 / MPOB)).